A 260-amino-acid chain; its full sequence is Putative serine protease 45 (260 aa).

In terms of domain architecture, Peptidase S1 spans 1–234; it reads MTRHWPWEVS…YTKWIKKQMS (234 aa). Residues C19 and C35 are joined by a disulfide bond. H34 (charge relay system) is an active-site residue. An N-linked (GlcNAc...) asparagine glycan is attached at N55. The Charge relay system role is filled by D82. Intrachain disulfides connect C116/C192, C151/C173, and C182/C210. S186 (charge relay system) is an active-site residue.

This sequence belongs to the peptidase S1 family.

The polypeptide is Putative serine protease 45 (Homo sapiens (Human)).